An 807-amino-acid polypeptide reads, in one-letter code: Phenylalanine--tRNA ligase beta subunit (807 aa).

In terms of domain architecture, tRNA-binding spans 39 to 153 (SARAQGVVVG…SLPPNGSPVA (115 aa)). The B5 domain maps to 407-491 (AEAGPVLLRR…RLVGFDRFGA (85 aa)). Mg(2+)-binding residues include Asp469, Asp475, Glu478, and Glu479. Residues 713–806 (PTVPFSERDL…LSKQFQAELR (94 aa)) form the FDX-ACB domain.

The protein belongs to the phenylalanyl-tRNA synthetase beta subunit family. Type 1 subfamily. In terms of assembly, tetramer of two alpha and two beta subunits. It depends on Mg(2+) as a cofactor.

It is found in the cytoplasm. It catalyses the reaction tRNA(Phe) + L-phenylalanine + ATP = L-phenylalanyl-tRNA(Phe) + AMP + diphosphate + H(+). This Synechococcus sp. (strain CC9605) protein is Phenylalanine--tRNA ligase beta subunit.